The primary structure comprises 294 residues: MINGSIVALITPMNSDGSVDFASLERLVEFHIDQGTDAIVAVGTTGESATLPMSEHVTVVSQTVKFAAGRVPVIGGNGANATSEAVELTKSLSKVGVAAMLGVTPYYNKPTPKGLIAHYKAVAASTDIPQILYNVPGRTAVDMLPETVAELVSVSNIIGVKEATGDLSRVKRLRELCGDDFLLYSGDDATAREFLLLGGNGVISVANNIVPQAFKAMCDAALAGNAELALSIDTPLRGLYSTLFCEANPIPVKWAAHRMGLIECGHIRLPLTELSEQCHGLLIEAMTRAQIEVK.

Pyruvate is bound at residue Thr45. The active-site Proton donor/acceptor is Tyr133. Residue Lys161 is the Schiff-base intermediate with substrate of the active site. Ile203 contacts pyruvate.

This sequence belongs to the DapA family. As to quaternary structure, homotetramer; dimer of dimers.

The protein resides in the cytoplasm. The enzyme catalyses L-aspartate 4-semialdehyde + pyruvate = (2S,4S)-4-hydroxy-2,3,4,5-tetrahydrodipicolinate + H2O + H(+). The protein operates within amino-acid biosynthesis; L-lysine biosynthesis via DAP pathway; (S)-tetrahydrodipicolinate from L-aspartate: step 3/4. In terms of biological role, catalyzes the condensation of (S)-aspartate-beta-semialdehyde [(S)-ASA] and pyruvate to 4-hydroxy-tetrahydrodipicolinate (HTPA). The polypeptide is 4-hydroxy-tetrahydrodipicolinate synthase (Shewanella baltica (strain OS223)).